A 596-amino-acid polypeptide reads, in one-letter code: Transcription factor IIIB 70 kDa subunit (596 aa).

The segment at M1–E33 adopts a TFIIB-type zinc-finger fold. C4, C7, C25, and C28 together coordinate Zn(2+). 2 tandem repeats follow at residues V90–K166 and F185–N264. Disordered regions lie at residues G363 to G421 and I509 to K534. Residues N365–T375 show a composition bias toward basic and acidic residues. A phosphoserine mark is found at S381 and S384. The segment covering E388 to G421 has biased composition (basic and acidic residues). The span at V516 to N526 shows a compositional bias: basic residues.

Belongs to the TFIIB family. As to quaternary structure, TFIIIB comprises the TATA-binding protein (TBP), the B-related factor (BRF) and the B' component (TFC5).

It is found in the nucleus. General activator of RNA polymerase III transcription. Interacts with TBP. Binds to Pol III subunit C34 and to the TAU135 component of TFIIIC. The protein is Transcription factor IIIB 70 kDa subunit (BRF1) of Saccharomyces cerevisiae (strain ATCC 204508 / S288c) (Baker's yeast).